We begin with the raw amino-acid sequence, 438 residues long: MAYEEYLKDFLEISNITVGDTVKVTKPHIEHEGMLLEKPDYSNENTIILKLDSGYNIGIDIKDAKIEKISEGKKPQIELDPVDKKISDKKKNLSILSTGGTVASVIDYKTGAVHPAFTADDLLRATPELVDYANINAKAIFNILSENMTPEYWKKTATTIYDEINNGADGIIIAHGTDTMHYTASALSFMIDSPVPIVLTGAQRSSDRPSSDAFTNLMASVNAAKSDIAEVTICMHGTEDDSYCDLHRGTRARKMHTSRRDTFTSINMNPLARIENNKVTINDTQVKYTKRNEKELSLNTNLADKVALIKMYPGISPEIIDIYVDKNYDGIVIEGTGLGHCSDDVITSITRATSEDIPVVMTSQCLFGRTNMNVYSSGRRLLQNNVIGVGDMLPETAYTKLLWAAGQTDNVSEIYEIMKTNLKGEMDTTLSQNYFIKN.

The 331-residue stretch at 91–421 (KNLSILSTGG…SEIYEIMKTN (331 aa)) folds into the Asparaginase/glutaminase domain. Residues threonine 101, threonine 177, aspartate 178, and lysine 254 contribute to the active site.

Belongs to the asparaginase 1 family. GatD subfamily. In terms of assembly, heterodimer of GatD and GatE.

The enzyme catalyses L-glutamyl-tRNA(Gln) + L-glutamine + ATP + H2O = L-glutaminyl-tRNA(Gln) + L-glutamate + ADP + phosphate + H(+). In terms of biological role, allows the formation of correctly charged Gln-tRNA(Gln) through the transamidation of misacylated Glu-tRNA(Gln) in organisms which lack glutaminyl-tRNA synthetase. The reaction takes place in the presence of glutamine and ATP through an activated gamma-phospho-Glu-tRNA(Gln). The GatDE system is specific for glutamate and does not act on aspartate. This Methanosphaera stadtmanae (strain ATCC 43021 / DSM 3091 / JCM 11832 / MCB-3) protein is Glutamyl-tRNA(Gln) amidotransferase subunit D.